We begin with the raw amino-acid sequence, 268 residues long: Putative hydro-lyase Arad_8587 (268 aa).

This sequence belongs to the D-glutamate cyclase family.

This chain is Putative hydro-lyase Arad_8587, found in Rhizobium rhizogenes (strain K84 / ATCC BAA-868) (Agrobacterium radiobacter).